The primary structure comprises 312 residues: Olfactory receptor 1493 (312 aa).

Residues 1–23 lie on the Extracellular side of the membrane; it reads MNNKTVITHFLLLGLPIPPEHQQ. N-linked (GlcNAc...) asparagine glycosylation is present at N3. A helical membrane pass occupies residues 24 to 48; the sequence is LFFALFLIMYLTTFLGNLLIVVLVQ. The Cytoplasmic segment spans residues 49-55; it reads LDSHLHT. The chain crosses the membrane as a helical span at residues 56–77; it reads PMYLFLSNLSFSDLCFSSVTML. The Extracellular portion of the chain corresponds to 78–98; the sequence is KLLQNIQSQVPSISYAGCLTQ. A disulfide bond links C95 and C187. A helical membrane pass occupies residues 99-118; that stretch reads IFFFLLFGYLGNFLLVAMAY. Topologically, residues 119–137 are cytoplasmic; the sequence is DRYVAICFPLHYTNIMSHK. The chain crosses the membrane as a helical span at residues 138 to 156; sequence LCTCLLLVFWIMTSSHAMM. Over 157-194 the chain is Extracellular; the sequence is HTLLAARLSFCENNVLLNFFCDLFVLLKLACSDTYVNE. Residues 195–217 form a helical membrane-spanning segment; sequence LMIHIMGVIIIVIPFVLIVISYA. Residues 218 to 234 lie on the Cytoplasmic side of the membrane; it reads KIISSILKVPSTQSIHK. A helical membrane pass occupies residues 235–258; it reads VFSTCGSHLSVVSLFYGTIIGLYL. At 259-270 the chain is on the extracellular side; it reads CPSGDNFSLKGS. A helical membrane pass occupies residues 271–290; sequence AMAMMYTVVTPMLNPFIYSL. Topologically, residues 291-312 are cytoplasmic; that stretch reads RNRDMKQALIRVTCSKKISLPW.

It belongs to the G-protein coupled receptor 1 family. In terms of tissue distribution, olfactory epithelium.

It localises to the cell membrane. Functionally, odorant receptor. This is Olfactory receptor 1493 (Olr1493) from Rattus norvegicus (Rat).